The primary structure comprises 266 residues: Undecaprenyl-diphosphatase (266 aa).

A run of 8 helical transmembrane segments spans residues 1–21 (MDTF…FLPI), 39–59 (QGLS…VIYF), 87–107 (WWII…KDFI), 111–131 (LRSA…LWWA), 149–169 (ALLI…RSGA), 183–203 (AAAR…AILV), 218–238 (ALTL…HYFL), and 246–266 (MTPF…FIFL).

The protein belongs to the UppP family.

It is found in the cell inner membrane. The enzyme catalyses di-trans,octa-cis-undecaprenyl diphosphate + H2O = di-trans,octa-cis-undecaprenyl phosphate + phosphate + H(+). Its function is as follows. Catalyzes the dephosphorylation of undecaprenyl diphosphate (UPP). Confers resistance to bacitracin. In Shewanella putrefaciens (strain CN-32 / ATCC BAA-453), this protein is Undecaprenyl-diphosphatase.